Here is an 859-residue protein sequence, read N- to C-terminus: Bifunctional levopimaradiene synthase, chloroplastic (859 aa).

The N-terminal 70 residues, Met1–Ser70, are a transit peptide targeting the chloroplast. Residue Lys259 coordinates substrate. Asp392 and Asp394 together coordinate Mg(2+). A DXDD motif motif is present at residues Asp392–Asp395. Residue Lys479 participates in substrate binding. Positions 611, 615, 755, 759, and 763 each coordinate Mg(2+). Positions Asp611–Asp615 match the DDXXD motif motif.

Belongs to the terpene synthase family. Tpsd subfamily. It depends on Mg(2+) as a cofactor.

It localises to the plastid. The protein resides in the chloroplast. The catalysed reaction is (2E,6E,10E)-geranylgeranyl diphosphate = (+)-copalyl diphosphate. It catalyses the reaction (+)-copalyl diphosphate = abieta-8(14),12-diene + diphosphate. It functions in the pathway terpene metabolism; oleoresin biosynthesis. In terms of biological role, involved in defensive oleoresin formation in conifers in response to insect attack or other injury. Involved in diterpene (C20) olefins biosynthesis. Bifunctional enzyme that catalyzes two sequential cyclizations of geranylgeranyl diphosphate (GGPP) to levopimaradiene. Levopimaradiene is the major products of the enzyme followed by abietadiene, neoabietadiene and palustradiene. In Picea abies (Norway spruce), this protein is Bifunctional levopimaradiene synthase, chloroplastic (TPS-LAS).